A 322-amino-acid polypeptide reads, in one-letter code: 4-hydroxythreonine-4-phosphate dehydrogenase (322 aa).

Substrate contacts are provided by His126 and Thr127. A divalent metal cation-binding residues include His160, His205, and His260. Residues Lys268, Asn277, and Arg286 each coordinate substrate.

The protein belongs to the PdxA family. As to quaternary structure, homodimer. Zn(2+) is required as a cofactor. It depends on Mg(2+) as a cofactor. The cofactor is Co(2+).

Its subcellular location is the cytoplasm. It carries out the reaction 4-(phosphooxy)-L-threonine + NAD(+) = 3-amino-2-oxopropyl phosphate + CO2 + NADH. It functions in the pathway cofactor biosynthesis; pyridoxine 5'-phosphate biosynthesis; pyridoxine 5'-phosphate from D-erythrose 4-phosphate: step 4/5. Functionally, catalyzes the NAD(P)-dependent oxidation of 4-(phosphooxy)-L-threonine (HTP) into 2-amino-3-oxo-4-(phosphooxy)butyric acid which spontaneously decarboxylates to form 3-amino-2-oxopropyl phosphate (AHAP). This chain is 4-hydroxythreonine-4-phosphate dehydrogenase, found in Paracoccus denitrificans (strain Pd 1222).